A 942-amino-acid polypeptide reads, in one-letter code: MDFLNEIASKWQKVWDSERVYEADVDRTKEKKFITVAFPYTNSPLHIGHGRTYITADIYARYLRMKGYNVLFPFAFQFTGTPILSIADAVKRGDEEIISTFTNVYQIPIGVISKFSDPSYLSAYFKEDMRNTALTLGLSIDRRREFTTIDPAFERFVQWQYKRLQEIGYIKKEKAPVAYCPVDEFPVGMHDTRGDIEPEIIDLDVIYFQGEKLLFLTATSRPETIFGAVAILINPDSDYSIVVDNKNGKRLVMSTEAFKKLSFQMSLTEEERKKGGELIGLNVTNPVTLKKLTVLPSKYVESKQGTGVVMAVPAHEPLHYLALSELKESFEIVPVIKSEDYGDFPAMEVLETAQTTSAQELKDYIDTLYRIEFHKGSIRDEVVDLVPDYMKQFVGERIAGKSVREARSSVVELLRNLGVHGNIYEIINGPVYCRCGAEVVVKVFDDQWFIDYSNSTWKSSVLKSLDKIEILPQDAKREISKIIFNMKPRPFTRSRGLGVRLPWDDRQIIDSLSDSTIYTVFYIVANKVKSYPTSILNERFWDYVVLGRGDSSQLSRELGIPKEQLEELRMEVEYWYPVDSRHSGRDLVQNHIPYYLYHHVGVLGEDKVPKRIVLNGFIRVGGKKMSKSFGNVYPLNKAIREYGVDTVRLALTSTSSLSDDIEFSPNIAKSIGEQLKHIHDFIENLIKLQSVNEIRKVDLWISSLISEYIDLIDNCLSNLDLRTAYKTIYYDIYEDLKDYLELGNGKINSDIIKNVISVWIRLMAPFTPHLAEELWHKLDNSLVVRQRFPSKGELQYDKRALLEIEYLRYTIDLINSMKSKMSKEPETVIIYVNEDNTQRDLIRKAIESLKERKSLPDFEKEVGDREMARLAYEIAGDLPDKIKNLAEIGINESEILTSNAQFLLNKLDVKEIYIYNSKDPSTPDIKGKKSIALPYKPGIILT.

Positions 39-49 match the 'HIGH' region motif; sequence PYTNSPLHIGH. Positions 624–628 match the 'KMSKS' region motif; it reads KMSKS. Position 627 (lysine 627) interacts with ATP.

Belongs to the class-I aminoacyl-tRNA synthetase family.

It localises to the cytoplasm. The enzyme catalyses tRNA(Leu) + L-leucine + ATP = L-leucyl-tRNA(Leu) + AMP + diphosphate. The chain is Leucine--tRNA ligase 1 from Sulfolobus acidocaldarius (strain ATCC 33909 / DSM 639 / JCM 8929 / NBRC 15157 / NCIMB 11770).